The primary structure comprises 282 residues: MGSHRDLPAGMVNHIFTNSGISSFTEFVGSYAPDLLPGRNETLAAPVGDRIPHATTIVAATCAGGVVMAGDRRATSGNIISQRDMEKVFRTDDYSCMGIAGTASTGIEMARLYRVELEHYEKMEGRTLSVAGKANRLATMIRGNLGMAMQGLVVVPLFAAYDPEIDGGRIFGYDVGGGPYEQQQYHSIGSGSIFARGSLKKLYRENASPEEVVLTLIHALYDAADDDSATGGPDVTRKIWPVVAQITADGFHRLSDEEVGGHVQTVLQERMSSPDGPVAPLR.

Residues methionine 1–alanine 54 constitute a propeptide, removed in mature form; by autocatalysis. The active-site Nucleophile is threonine 55.

This sequence belongs to the peptidase T1B family. In terms of assembly, the 20S proteasome core is composed of 14 alpha and 14 beta subunits that assemble into four stacked heptameric rings, resulting in a barrel-shaped structure. The two inner rings, each composed of seven catalytic beta subunits, are sandwiched by two outer rings, each composed of seven alpha subunits. The catalytic chamber with the active sites is on the inside of the barrel. Has a gated structure, the ends of the cylinder being occluded by the N-termini of the alpha-subunits. Is capped by the proteasome-associated ATPase, ARC.

It localises to the cytoplasm. The enzyme catalyses Cleavage of peptide bonds with very broad specificity.. It participates in protein degradation; proteasomal Pup-dependent pathway. The formation of the proteasomal ATPase ARC-20S proteasome complex, likely via the docking of the C-termini of ARC into the intersubunit pockets in the alpha-rings, may trigger opening of the gate for substrate entry. Interconversion between the open-gate and close-gate conformations leads to a dynamic regulation of the 20S proteasome proteolysis activity. Its function is as follows. Component of the proteasome core, a large protease complex with broad specificity involved in protein degradation. The sequence is that of Proteasome subunit beta from Streptosporangium roseum (strain ATCC 12428 / DSM 43021 / JCM 3005 / KCTC 9067 / NCIMB 10171 / NRRL 2505 / NI 9100).